The primary structure comprises 276 residues: Digeranylgeranylglyceryl phosphate synthase (276 aa).

The next 8 membrane-spanning stretches (helical) occupy residues 12 to 34, 38 to 60, 84 to 104, 107 to 127, 146 to 166, 202 to 222, 224 to 244, and 256 to 276; these read PHNC…GSVP, ILIL…NDYF, ALWY…LISL, FAFA…LKPL, GAIA…AFLV, VAAF…KAGV, VGYY…YLIL, and QLLL…AALM.

It belongs to the UbiA prenyltransferase family. DGGGP synthase subfamily. Mg(2+) serves as cofactor.

It is found in the cell membrane. The catalysed reaction is sn-3-O-(geranylgeranyl)glycerol 1-phosphate + (2E,6E,10E)-geranylgeranyl diphosphate = 2,3-bis-O-(geranylgeranyl)-sn-glycerol 1-phosphate + diphosphate. It functions in the pathway membrane lipid metabolism; glycerophospholipid metabolism. Prenyltransferase that catalyzes the transfer of the geranylgeranyl moiety of geranylgeranyl diphosphate (GGPP) to the C2 hydroxyl of (S)-3-O-geranylgeranylglyceryl phosphate (GGGP). This reaction is the second ether-bond-formation step in the biosynthesis of archaeal membrane lipids. This chain is Digeranylgeranylglyceryl phosphate synthase, found in Thermococcus gammatolerans (strain DSM 15229 / JCM 11827 / EJ3).